Here is a 521-residue protein sequence, read N- to C-terminus: Phospholipase C B (521 aa).

The tat-type signal signal peptide spans 1–39 (MGSEHPVDGMTRRQFFAKAAAATTAGAFMSLAGPIIEKA). The segment at 501-521 (FPQSMPTQETAPTRGIPSGLC) is disordered.

It belongs to the bacterial phospholipase C family. Predicted to be exported by the Tat system. The position of the signal peptide cleavage has not been experimentally proven.

Its subcellular location is the secreted. The protein localises to the cell wall. The catalysed reaction is a 1,2-diacyl-sn-glycero-3-phosphocholine + H2O = phosphocholine + a 1,2-diacyl-sn-glycerol + H(+). Involved in virulence. Induces cytotoxic effects on mouse macrophage cell lines, via direct or indirect enzymatic hydrolysis of cell membrane phospholipids. Hydrolyzes phosphatidylcholine. In Mycobacterium tuberculosis (strain CDC 1551 / Oshkosh), this protein is Phospholipase C B.